A 184-amino-acid chain; its full sequence is Large ribosomal subunit protein uL5c (184 aa).

It belongs to the universal ribosomal protein uL5 family. In terms of assembly, part of the 50S ribosomal subunit; contacts the 5S rRNA.

It is found in the plastid. Its subcellular location is the chloroplast. Binds 5S rRNA, forms part of the central protuberance of the 50S subunit. This chain is Large ribosomal subunit protein uL5c (rpl5), found in Nephroselmis olivacea (Green alga).